The following is a 107-amino-acid chain: CLAVATA3/ESR (CLE)-related protein 10 (107 aa).

The N-terminal stretch at 1 to 23 (MKTNRNRPINILIVFFLLTTARA) is a signal peptide. N-linked (GlcNAc...) asparagine glycans are attached at residues Asn-27 and Asn-30. The disordered stretch occupies residues 73-107 (SRQPLFSPPPPPTEIDQRYGVEKRLVPSGPNPLHN). Over residues 87–97 (IDQRYGVEKRL) the composition is skewed to basic and acidic residues. Hydroxyproline occurs at positions 99 and 102. O-linked (Ara...) hydroxyproline glycosylation is present at Pro-102.

Belongs to the CLV3/ESR signal peptide family. Post-translationally, the O-glycosylation (arabinosylation) of the hydroxyproline Pro-102 enhances binding affinity of the CLE10p peptide for its receptor. As to expression, expressed in stems, apex, leaves, flowers, siliques and pollen.

It localises to the secreted. It is found in the extracellular space. In terms of biological role, extracellular signal peptide that regulates cell fate. Represses root apical meristem maintenance. Regulates the transition of protophloem cells from proliferation to differentiation, thus impinging on postembryonic growth capacity of the root meristem; this signaling pathway requires CRN and CLV2. The chain is CLAVATA3/ESR (CLE)-related protein 10 from Arabidopsis thaliana (Mouse-ear cress).